The chain runs to 587 residues: Calcium/calmodulin-dependent protein kinase kinase 2 (587 aa).

Positions 1-11 (MSSCVSSQPTS) are enriched in polar residues. Disordered stretches follow at residues 1–32 (MSSCVSSQPTSDRAAPQDELGSGGVSRESQKP) and 74–115 (EADG…SSLD). The residue at position 2 (Ser-2) is an N-acetylserine. Residues Ser-99, Ser-113, Ser-128, Ser-132, and Ser-136 each carry the phosphoserine modification. Residues 101-115 (QERSQGGPASSSSLD) are compositionally biased toward polar residues. The Protein kinase domain occupies 164 to 445 (YTLKDEIGKG…VPEIKLHPWV (282 aa)). ATP is bound by residues 170-178 (IGKGSYGVV) and Lys-193. Residues 203–225 (QAGFPRRPPPRGTRPAPGGCIQP) are RP domain. Residues 204–224 (AGFPRRPPPRGTRPAPGGCIQ) form a disordered region. The active-site Proton acceptor is the Asp-311. The autoinhibitory domain stretch occupies residues 471-476 (ENSVKH). A calmodulin-binding region spans residues 474-499 (VKHIPSLATVILVKTMIRKRSFGNPF). Phosphoserine is present on residues Ser-494 and Ser-510. A disordered region spans residues 496 to 587 (GNPFEGSRRE…QQPEEAMEPE (92 aa)). Positions 520-535 (PTREWEPLSEPKEARQ) are enriched in basic and acidic residues. The span at 569 to 579 (PGSPPRTPPQQ) shows a compositional bias: pro residues. Ser-571 carries the post-translational modification Phosphoserine.

This sequence belongs to the protein kinase superfamily. Ser/Thr protein kinase family. Interacts with calmodulin. Phosphorylated by PKA. Each isoform may show a different pattern of phosphorylation. Autophosphorylated. Mainly expressed in brain, but detected in all tissues tested (at protein level). In the brain, isoform 1 may be predominant. with high levels in the cerebellum and hippocampus, although isoform 3 is detectable. Isoform 3 is also expressed in lung.

The protein resides in the nucleus. It localises to the cytoplasm. It is found in the cell projection. Its subcellular location is the neuron projection. The catalysed reaction is L-seryl-[protein] + ATP = O-phospho-L-seryl-[protein] + ADP + H(+). The enzyme catalyses L-threonyl-[protein] + ATP = O-phospho-L-threonyl-[protein] + ADP + H(+). Its activity is regulated as follows. Activated by Ca(2+)/calmodulin. Binding of calmodulin may relieve intrasteric autoinhibition. Autophosphorylation does not alter activity or regulation by Ca(2+)/calmodulin. In part, activity is independent on Ca(2+)/calmodulin. Functionally, calcium/calmodulin-dependent protein kinase belonging to a proposed calcium-triggered signaling cascade involved in a number of cellular processes. Phosphorylates CAMK1 and CAMK4. Phosphorylates CAMK1D. Seems to be involved in hippocampal activation of CREB1. Efficiently phosphorylates 5'-AMP-activated protein kinase (AMPK) trimer, including that consisting of PRKAA1, PRKAB1 and PRKAG1. This phosphorylation is stimulated in response to Ca(2+) signals. May play a role in neurite growth. Isoform 2 may promote neurite elongation, while isoform 1 may promoter neurite branching. This is Calcium/calmodulin-dependent protein kinase kinase 2 (Camkk2) from Rattus norvegicus (Rat).